The following is an 865-amino-acid chain: FO synthase (865 aa).

The tract at residues 1–21 (MIEGVTELATPNVPPAPPSPS) is disordered. 2 Radical SAM core domains span residues 76–320 (ITYS…LGPD) and 544–785 (VTYV…DNIQ). The cofG-like stretch occupies residues 77–409 (TYSRNVFIPL…PRIGAHVAAL (333 aa)). [4Fe-4S] cluster is bound by residues Cys-90, Cys-94, Cys-97, Cys-558, Cys-562, and Cys-565. A cofH-like region spans residues 521-854 (DGAELDAVAA…RERTTVYGRV (334 aa)).

It in the N-terminal section; belongs to the radical SAM superfamily. CofG family. This sequence in the C-terminal section; belongs to the radical SAM superfamily. CofH family. [4Fe-4S] cluster serves as cofactor.

The catalysed reaction is 5-amino-6-(D-ribitylamino)uracil + L-tyrosine + S-adenosyl-L-methionine = 5-amino-5-(4-hydroxybenzyl)-6-(D-ribitylimino)-5,6-dihydrouracil + 2-iminoacetate + 5'-deoxyadenosine + L-methionine + H(+). It catalyses the reaction 5-amino-5-(4-hydroxybenzyl)-6-(D-ribitylimino)-5,6-dihydrouracil + S-adenosyl-L-methionine = 7,8-didemethyl-8-hydroxy-5-deazariboflavin + 5'-deoxyadenosine + L-methionine + NH4(+) + H(+). It participates in cofactor biosynthesis; coenzyme F0 biosynthesis. Its function is as follows. Catalyzes the radical-mediated synthesis of 7,8-didemethyl-8-hydroxy-5-deazariboflavin (FO) from 5-amino-6-(D-ribitylamino)uracil and L-tyrosine. This chain is FO synthase (fbiC), found in Nocardia farcinica (strain IFM 10152).